The chain runs to 465 residues: ATP synthase subunit beta (465 aa).

148-155 (GGAGVGKT) provides a ligand contact to ATP.

The protein belongs to the ATPase alpha/beta chains family. F-type ATPases have 2 components, CF(1) - the catalytic core - and CF(0) - the membrane proton channel. CF(1) has five subunits: alpha(3), beta(3), gamma(1), delta(1), epsilon(1). CF(0) has three main subunits: a(1), b(2) and c(9-12). The alpha and beta chains form an alternating ring which encloses part of the gamma chain. CF(1) is attached to CF(0) by a central stalk formed by the gamma and epsilon chains, while a peripheral stalk is formed by the delta and b chains.

It localises to the cell inner membrane. The enzyme catalyses ATP + H2O + 4 H(+)(in) = ADP + phosphate + 5 H(+)(out). Functionally, produces ATP from ADP in the presence of a proton gradient across the membrane. The catalytic sites are hosted primarily by the beta subunits. The polypeptide is ATP synthase subunit beta (Neisseria meningitidis serogroup A / serotype 4A (strain DSM 15465 / Z2491)).